We begin with the raw amino-acid sequence, 404 residues long: Imidazolonepropionase (404 aa).

Positions 73 and 75 each coordinate Fe(3+). 2 residues coordinate Zn(2+): His-73 and His-75. 4-imidazolone-5-propanoate-binding residues include Arg-82, Tyr-145, and His-178. Tyr-145 provides a ligand contact to N-formimidoyl-L-glutamate. His-243 is a binding site for Fe(3+). His-243 is a Zn(2+) binding site. Gln-246 serves as a coordination point for 4-imidazolone-5-propanoate. A Fe(3+)-binding site is contributed by Asp-318. Asp-318 lines the Zn(2+) pocket. Residues Asn-320 and Gly-322 each contribute to the N-formimidoyl-L-glutamate site. Ser-323 contacts 4-imidazolone-5-propanoate.

It belongs to the metallo-dependent hydrolases superfamily. HutI family. Zn(2+) is required as a cofactor. Requires Fe(3+) as cofactor.

The protein resides in the cytoplasm. It carries out the reaction 4-imidazolone-5-propanoate + H2O = N-formimidoyl-L-glutamate. It functions in the pathway amino-acid degradation; L-histidine degradation into L-glutamate; N-formimidoyl-L-glutamate from L-histidine: step 3/3. Catalyzes the hydrolytic cleavage of the carbon-nitrogen bond in imidazolone-5-propanoate to yield N-formimidoyl-L-glutamate. It is the third step in the universal histidine degradation pathway. The chain is Imidazolonepropionase from Bradyrhizobium diazoefficiens (strain JCM 10833 / BCRC 13528 / IAM 13628 / NBRC 14792 / USDA 110).